Reading from the N-terminus, the 142-residue chain is GAFIMPGTLWCGAGNAASDYSQLGTEKDTDMCCRDHDHCSDTMAALEYKHGMRNYRPHTVSHCDCDNQFRSCLMNVKDRTADLVGMTYFTVLKISCFELEEGEGCVDNNFSQQCTKSEIMPVAKLVSAAPYQAQAETQSGEG.

3 residues coordinate Ca(2+): tryptophan 10, glycine 12, and glycine 14. Intrachain disulfides connect cysteine 11–cysteine 33, cysteine 32–cysteine 72, and cysteine 39–cysteine 65. The active site involves histidine 36. Aspartate 37 contacts Ca(2+).

Belongs to the phospholipase A2 family. Group III subfamily. It depends on Ca(2+) as a cofactor. Expressed by the venom gland.

It localises to the secreted. The catalysed reaction is a 1,2-diacyl-sn-glycero-3-phosphocholine + H2O = a 1-acyl-sn-glycero-3-phosphocholine + a fatty acid + H(+). PLA2 catalyzes the calcium-dependent hydrolysis of the 2-acyl groups in 3-sn-phosphoglycerides. The sequence is that of Acidic phospholipase A2 PA4 from Heloderma suspectum (Gila monster).